Reading from the N-terminus, the 178-residue chain is MKLLFFFLVLAVSAAVAENAGVQKAFMDIEIDGESAGRIVLELRGDVVPKTVKNFIGLFDKYKGSTFHRVIADFMIQGGDFENHNGTGGHSIYGPRFEDENFTLKHDRGVISMANAGPNTNGSQFFITTVKTEWLDGRHVVFGKITNDSWPTVQAIEALGSSGGRPSKIAKITDIGLL.

The signal sequence occupies residues 1–17 (MKLLFFFLVLAVSAAVA). The region spanning 26–177 (FMDIEIDGES…KIAKITDIGL (152 aa)) is the PPIase cyclophilin-type domain.

It belongs to the cyclophilin-type PPIase family. PPIase A subfamily.

The enzyme catalyses [protein]-peptidylproline (omega=180) = [protein]-peptidylproline (omega=0). PPIases accelerate the folding of proteins. It catalyzes the cis-trans isomerization of proline imidic peptide bonds in oligopeptides. Up-regulates interferon gamma production by bovine T-cells. Stimulates high levels of IFN-gamma production by peripheral blood mononuclear cells and T-cells. The IFN-gamma-inducing effect is blocked by cyclosporin A (CsA). This is Peptidyl-prolyl cis-trans isomerase from Neospora caninum (Coccidian parasite).